The sequence spans 546 residues: Chaperonin GroEL 1 (546 aa).

Residues 30–33, K51, 87–91, G415, 479–481, and D495 each bind ATP; these read TLGP, DGTTT, and NAA. A disordered region spans residues 526-546; it reads KEDAPMPGGMPGGMGGMGMDM. The span at 534–546 shows a compositional bias: gly residues; it reads GMPGGMGGMGMDM.

The protein belongs to the chaperonin (HSP60) family. In terms of assembly, forms a cylinder of 14 subunits composed of two heptameric rings stacked back-to-back. Interacts with the co-chaperonin GroES.

It is found in the cytoplasm. It catalyses the reaction ATP + H2O + a folded polypeptide = ADP + phosphate + an unfolded polypeptide.. Together with its co-chaperonin GroES, plays an essential role in assisting protein folding. The GroEL-GroES system forms a nano-cage that allows encapsulation of the non-native substrate proteins and provides a physical environment optimized to promote and accelerate protein folding. This Burkholderia cenocepacia (strain HI2424) protein is Chaperonin GroEL 1.